Consider the following 759-residue polypeptide: RNA-binding protein 28 (759 aa).

N-acetylalanine is present on alanine 2. Residues 4–80 (LTLFVGRLPP…CKINVTVAKK (77 aa)) form the RRM 1 domain. Residues 84 to 105 (NKTKEKGKNENSECPKKEPKAK) are disordered. The span at 85–101 (KTKEKGKNENSECPKKE) shows a compositional bias: basic and acidic residues. One can recognise an RRM 2 domain in the interval 114-191 (ARLIIRNLSF…RTVAVDWAVA (78 aa)). Position 122 is a phosphoserine (serine 122). The segment at 201-330 (VSAIGEEKSH…NKKKRKLPSD (130 aa)) is disordered. Residues 205-224 (GEEKSHESKHQESVKKKGRE) are compositionally biased toward basic and acidic residues. Acidic residues-rich tracts occupy residues 225-256 (EEDM…EEEN) and 284-313 (SEED…EEQE). 2 RRM domains span residues 335 to 419 (KTVF…LAVT) and 487 to 597 (TRLC…RSLQ). Serine 397 carries the phosphoserine modification. A disordered region spans residues 594–759 (RSLQKMRSKP…LAKRSKWFDS (166 aa)). Residues 615–640 (PAKDQQQKAAQHHTEEQSKVPPEQKR) show a composition bias toward basic and acidic residues. Residue lysine 653 forms a Glycyl lysine isopeptide (Lys-Gly) (interchain with G-Cter in SUMO2) linkage. Residues 689–698 (VKPVHPKKPK) show a composition bias toward basic residues. A compositionally biased stretch (polar residues) spans 700-715 (QINQWKQEKQQLSSEQ).

In terms of assembly, interacts with U1, U2, U4, U5, and U6 spliceosomal small nuclear RNAs (snRNAs). As to expression, ubiquitously expressed.

It is found in the nucleus. The protein localises to the nucleolus. Nucleolar component of the spliceosomal ribonucleoprotein complexes. The polypeptide is RNA-binding protein 28 (RBM28) (Homo sapiens (Human)).